The following is a 231-amino-acid chain: Large ribosomal subunit protein uL1 (231 aa).

The protein belongs to the universal ribosomal protein uL1 family. In terms of assembly, part of the 50S ribosomal subunit.

In terms of biological role, binds directly to 23S rRNA. The L1 stalk is quite mobile in the ribosome, and is involved in E site tRNA release. Protein L1 is also a translational repressor protein, it controls the translation of the L11 operon by binding to its mRNA. The protein is Large ribosomal subunit protein uL1 of Stutzerimonas stutzeri (strain A1501) (Pseudomonas stutzeri).